The chain runs to 258 residues: Imidazole glycerol phosphate synthase subunit HisF (258 aa).

Active-site residues include D11 and D130.

It belongs to the HisA/HisF family. In terms of assembly, heterodimer of HisH and HisF.

Its subcellular location is the cytoplasm. The enzyme catalyses 5-[(5-phospho-1-deoxy-D-ribulos-1-ylimino)methylamino]-1-(5-phospho-beta-D-ribosyl)imidazole-4-carboxamide + L-glutamine = D-erythro-1-(imidazol-4-yl)glycerol 3-phosphate + 5-amino-1-(5-phospho-beta-D-ribosyl)imidazole-4-carboxamide + L-glutamate + H(+). Its pathway is amino-acid biosynthesis; L-histidine biosynthesis; L-histidine from 5-phospho-alpha-D-ribose 1-diphosphate: step 5/9. Functionally, IGPS catalyzes the conversion of PRFAR and glutamine to IGP, AICAR and glutamate. The HisF subunit catalyzes the cyclization activity that produces IGP and AICAR from PRFAR using the ammonia provided by the HisH subunit. This Escherichia fergusonii (strain ATCC 35469 / DSM 13698 / CCUG 18766 / IAM 14443 / JCM 21226 / LMG 7866 / NBRC 102419 / NCTC 12128 / CDC 0568-73) protein is Imidazole glycerol phosphate synthase subunit HisF.